We begin with the raw amino-acid sequence, 247 residues long: E3 SUMO-protein ligase NSE2 (247 aa).

M1 is subject to N-acetylmethionine. Glycyl lysine isopeptide (Lys-Gly) (interchain with G-Cter in SUMO2) cross-links involve residues K90 and K107. S116 carries the phosphoserine modification. Residues K125 and K130 each participate in a glycyl lysine isopeptide (Lys-Gly) (interchain with G-Cter in SUMO2) cross-link. The SP-RING-type zinc finger occupies 154-240; it reads VDEDIIVTQS…LRRAIENHNK (87 aa). C185, H187, C210, and C215 together coordinate Zn(2+).

Belongs to the NSE2 family. As to quaternary structure, component of the SMC5-SMC6 complex which consists at least of SMC5, SMC6, NSMCE2, NSMCE1, NSMCE4A or EID3 and NSMCE3. Post-translationally, sumoylated, possibly via autosumoylation.

It is found in the nucleus. Its subcellular location is the chromosome. The protein resides in the telomere. The protein localises to the PML body. Its pathway is protein modification; protein sumoylation. E3 SUMO-protein ligase component of the SMC5-SMC6 complex, a complex involved in DNA double-strand break repair by homologous recombination. Is not be required for the stability of the complex. The complex may promote sister chromatid homologous recombination by recruiting the SMC1-SMC3 cohesin complex to double-strand breaks. The complex is required for telomere maintenance via recombination in ALT (alternative lengthening of telomeres) cell lines and mediates sumoylation of shelterin complex (telosome) components which is proposed to lead to shelterin complex disassembly in ALT-associated PML bodies (APBs). Acts as an E3 ligase mediating SUMO attachment to various proteins such as SMC6L1 and TSNAX, the shelterin complex subunits TERF1, TERF2, TINF2 and TERF2IP, RAD51AP1, and maybe the cohesin components RAD21 and STAG2. Required for recruitment of telomeres to PML nuclear bodies. SUMO protein-ligase activity is required for the prevention of DNA damage-induced apoptosis by facilitating DNA repair, and for formation of APBs in ALT cell lines. Required for sister chromatid cohesion during prometaphase and mitotic progression. The chain is E3 SUMO-protein ligase NSE2 (NSMCE2) from Homo sapiens (Human).